A 130-amino-acid chain; its full sequence is Small ribosomal subunit protein uS8 (130 aa).

This sequence belongs to the universal ribosomal protein uS8 family. As to quaternary structure, part of the 30S ribosomal subunit. Contacts proteins S5 and S12.

Its function is as follows. One of the primary rRNA binding proteins, it binds directly to 16S rRNA central domain where it helps coordinate assembly of the platform of the 30S subunit. This chain is Small ribosomal subunit protein uS8, found in Aeromonas salmonicida (strain A449).